Consider the following 143-residue polypeptide: Large ribosomal subunit protein uL11 (143 aa).

It belongs to the universal ribosomal protein uL11 family. As to quaternary structure, part of the ribosomal stalk of the 50S ribosomal subunit. Interacts with L10 and the large rRNA to form the base of the stalk. L10 forms an elongated spine to which L12 dimers bind in a sequential fashion forming a multimeric L10(L12)X complex. Post-translationally, one or more lysine residues are methylated.

Functionally, forms part of the ribosomal stalk which helps the ribosome interact with GTP-bound translation factors. The protein is Large ribosomal subunit protein uL11 of Nitrosomonas europaea (strain ATCC 19718 / CIP 103999 / KCTC 2705 / NBRC 14298).